The primary structure comprises 155 residues: Probable ribosome biogenesis protein RLP24 (155 aa).

This sequence belongs to the eukaryotic ribosomal protein eL24 family.

In Encephalitozoon cuniculi (strain GB-M1) (Microsporidian parasite), this protein is Probable ribosome biogenesis protein RLP24 (RPL24).